A 217-amino-acid chain; its full sequence is MGQKVCAHGFRVGPTLIKGWDSVFYAEKQYKTLFIQDLKIRELVNKSFTQAQVSRILIERPSNKSIIININAKKPNIIIGKNGSEIDKLKKAIEKMTSLSEVYINIHEVRKFNIDAAIVAQTIASQLEKRVSFRKAMKTAIQASFKQGGQGIRVSCSGRLGGAEIARTEWYIEGRMPLHTLRADIDYSTAEAITTYGVIGVKVWIYKGEYTENKRYN.

Residues 40-110 form the KH type-2 domain; that stretch reads IRELVNKSFT…EVYINIHEVR (71 aa).

This sequence belongs to the universal ribosomal protein uS3 family. In terms of assembly, part of the 30S ribosomal subunit. Forms a tight complex with proteins S10 and S14.

Functionally, binds the lower part of the 30S subunit head. Binds mRNA in the 70S ribosome, positioning it for translation. The chain is Small ribosomal subunit protein uS3 from Rickettsia bellii (strain OSU 85-389).